The chain runs to 134 residues: uncharacterized protein (134 aa).

3 consecutive transmembrane segments (helical) span residues 21-41 (FSTT…LYLI), 52-72 (LVLL…TPYE), and 95-115 (IVMA…VYII).

It localises to the host membrane. This is an uncharacterized protein from Acidianus two-tailed virus (ATV).